Consider the following 415-residue polypeptide: Probable beta-1,4-xylosyltransferase IRX10L (415 aa).

Methionine 1 is a topological domain (cytoplasmic). Residues 2–22 traverse the membrane as a helical; Signal-anchor for type II membrane protein segment; it reads KLSSCVLIFLLCNTFSSISAF. The Lumenal segment spans residues 23–415; that stretch reads RLSRSQPTER…AGPVADLKPW (393 aa). N-linked (GlcNAc...) asparagine glycosylation is found at asparagine 142 and asparagine 403.

The protein belongs to the glycosyltransferase 47 family. Present in the xylem and phloem, and, to a lower extent, in interfascicular cells. Expressed in the root tip, shoot apical meristem (SAM), xylem cells of roots and stems, and in the vasculature of roots, cotyledons and leaves.

Its subcellular location is the golgi apparatus membrane. Functionally, involved in the synthesis of the hemicellulose glucuronoxylan, a major component of secondary cell walls. Probably involved in the elongation of glucuronoxylan xylosyl backbone. The protein is Probable beta-1,4-xylosyltransferase IRX10L (IRX10L) of Arabidopsis thaliana (Mouse-ear cress).